The following is a 165-amino-acid chain: 3-isopropylmalate dehydratase small subunit (165 aa).

It belongs to the LeuD family. LeuD type 2 subfamily. Heterodimer of LeuC and LeuD.

It catalyses the reaction (2R,3S)-3-isopropylmalate = (2S)-2-isopropylmalate. The protein operates within amino-acid biosynthesis; L-leucine biosynthesis; L-leucine from 3-methyl-2-oxobutanoate: step 2/4. Catalyzes the isomerization between 2-isopropylmalate and 3-isopropylmalate, via the formation of 2-isopropylmaleate. In Desulfovibrio desulfuricans (strain ATCC 27774 / DSM 6949 / MB), this protein is 3-isopropylmalate dehydratase small subunit.